The sequence spans 171 residues: Probable chorismate pyruvate-lyase (171 aa).

Substrate contacts are provided by M36, R78, L116, and E157.

The protein belongs to the UbiC family.

It is found in the cytoplasm. The enzyme catalyses chorismate = 4-hydroxybenzoate + pyruvate. It participates in cofactor biosynthesis; ubiquinone biosynthesis. Functionally, removes the pyruvyl group from chorismate, with concomitant aromatization of the ring, to provide 4-hydroxybenzoate (4HB) for the ubiquinone pathway. The sequence is that of Probable chorismate pyruvate-lyase from Bartonella bacilliformis (strain ATCC 35685 / KC583 / Herrer 020/F12,63).